The following is a 349-amino-acid chain: Ribosomal RNA small subunit methyltransferase H 2 (349 aa).

S-adenosyl-L-methionine contacts are provided by residues 80–82, Asp-100, Phe-130, Asp-149, and Gln-156; that span reads GGH.

The protein belongs to the methyltransferase superfamily. RsmH family.

It localises to the cytoplasm. The enzyme catalyses cytidine(1402) in 16S rRNA + S-adenosyl-L-methionine = N(4)-methylcytidine(1402) in 16S rRNA + S-adenosyl-L-homocysteine + H(+). Specifically methylates the N4 position of cytidine in position 1402 (C1402) of 16S rRNA. The sequence is that of Ribosomal RNA small subunit methyltransferase H 2 from Alkaliphilus metalliredigens (strain QYMF).